Here is a 140-residue protein sequence, read N- to C-terminus: Small ribosomal subunit protein uS19 (140 aa).

This sequence belongs to the universal ribosomal protein uS19 family.

Functionally, protein S19 forms a complex with S13 that binds strongly to the 16S ribosomal RNA. This Sulfolobus acidocaldarius (strain ATCC 33909 / DSM 639 / JCM 8929 / NBRC 15157 / NCIMB 11770) protein is Small ribosomal subunit protein uS19.